Reading from the N-terminus, the 131-residue chain is Agouti-signaling protein (131 aa).

The signal sequence occupies residues 1-20 (MNIFRLLLATLLVSLCFLTA). Asparagine 38 carries N-linked (GlcNAc...) asparagine glycosylation. The tract at residues 57–104 (KSKKISRKEAEKKRSSKKKASMKNVARPRPPPPNPCVATRNSCKSPAP) is disordered. Disulfide bonds link cysteine 92/cysteine 107, cysteine 99/cysteine 113, cysteine 106/cysteine 124, cysteine 110/cysteine 131, and cysteine 115/cysteine 122. Residues 92–131 (CVATRNSCKSPAPACCDPCASCQCRFFRSACTCRVLSPSC) enclose the Agouti domain.

It is found in the secreted. Its function is as follows. Involved in the regulation of melanogenesis. The binding of ASP to MC1R precludes alpha-MSH initiated signaling and thus blocks production of cAMP, leading to a down-regulation of eumelanogenesis (brown/black pigment) and thus increasing synthesis of pheomelanin (yellow/red pigment). This Vulpes vulpes (Red fox) protein is Agouti-signaling protein (ASIP).